Consider the following 388-residue polypeptide: Succinate--CoA ligase [ADP-forming] subunit beta (388 aa).

One can recognise an ATP-grasp domain in the interval 9-244 (KQLFAEYGLP…PSQDDPREAH (236 aa)). ATP contacts are provided by residues Lys46, 53 to 55 (GRG), Glu99, Thr102, and Glu107. Mg(2+) contacts are provided by Asn199 and Asp213. Substrate contacts are provided by residues Asn264 and 321–323 (GIV).

It belongs to the succinate/malate CoA ligase beta subunit family. Heterotetramer of two alpha and two beta subunits. Mg(2+) is required as a cofactor.

It carries out the reaction succinate + ATP + CoA = succinyl-CoA + ADP + phosphate. The enzyme catalyses GTP + succinate + CoA = succinyl-CoA + GDP + phosphate. The protein operates within carbohydrate metabolism; tricarboxylic acid cycle; succinate from succinyl-CoA (ligase route): step 1/1. Its function is as follows. Succinyl-CoA synthetase functions in the citric acid cycle (TCA), coupling the hydrolysis of succinyl-CoA to the synthesis of either ATP or GTP and thus represents the only step of substrate-level phosphorylation in the TCA. The beta subunit provides nucleotide specificity of the enzyme and binds the substrate succinate, while the binding sites for coenzyme A and phosphate are found in the alpha subunit. This chain is Succinate--CoA ligase [ADP-forming] subunit beta, found in Aeromonas hydrophila subsp. hydrophila (strain ATCC 7966 / DSM 30187 / BCRC 13018 / CCUG 14551 / JCM 1027 / KCTC 2358 / NCIMB 9240 / NCTC 8049).